Reading from the N-terminus, the 344-residue chain is Lipopolysaccharide heptosyltransferase 3 (344 aa).

This sequence belongs to the glycosyltransferase 9 family.

It catalyses the reaction an L-alpha-D-Hep-(1-&gt;3)-4-O-phospho-L-alpha-D-Hep-(1-&gt;5)-[alpha-Kdo-(2-&gt;4)]-alpha-Kdo-(2-&gt;6)-lipid A + ADP-L-glycero-beta-D-manno-heptose = an L-alpha-D-Hep-(1-&gt;7)-L-alpha-D-Hep-(1-&gt;3)-4-O-phospho-L-alpha-D-Hep-(1-&gt;5)-[alpha-Kdo-(2-&gt;4)]-alpha-Kdo-(2-&gt;6)-lipid A + ADP + H(+). The catalysed reaction is L-alpha-D-Hep-(1-&gt;3)-4-O-phospho-L-alpha-D-Hep-(1-&gt;5)-[alpha-Kdo-(2-&gt;4)]-alpha-Kdo-(2-&gt;6)-lipid A (E. coli) + ADP-L-glycero-beta-D-manno-heptose = L-alpha-D-Hep-(1-&gt;7)-L-alpha-D-Hep-(1-&gt;3)-4-O-phospho-L-alpha-D-Hep-(1-&gt;5)-[alpha-Kdo-(2-&gt;4)]-alpha-Kdo-(2-&gt;6)-lipid A (E. coli) + ADP + H(+). It participates in bacterial outer membrane biogenesis; LPS core biosynthesis. Glycosyltransferase involved in the biosynthesis of the core oligosaccharide region of lipopolysaccharide (LPS). Catalyzes the addition of the third heptose unit (HepIII) to the second heptose unit (HepII) of the phospho-Hep2-Kdo2-lipid A module. The sequence is that of Lipopolysaccharide heptosyltransferase 3 from Escherichia coli (strain K12).